Consider the following 314-residue polypeptide: MKAIESIPDRKLLLFKSCMVGQEYPGIETATSYVFDRLGVDYCINDEQSCCTGIGHYTDVFEGLTTAAIAARNFAVARKCGYPNITCLCSTCYAINKDACELLNTNDGVREKVNSIFREKGFDDLVYEKDSMNPRTNIYHAVEVLLSKVEKIREEIKFDFPGVKAASHHACHYYKVKYLDVIGNPENPQLIDTIAEACGASPVRWYEDRTLTCGMGFSQLHLNKSTSLQVTKTKLDSLQRAGVELMIHMCPNCHIQYDRYQPVIEKEFGVEYDMVHMNIAQFVALSMGADPYKVCGFQTHSVPLEGFLEKTGII.

Belongs to the HdrB family. The ferredoxin:CoB-CoM heterodisulfide reductase is composed of three subunits; HdrA1, HdrB1 and HdrC1. It depends on [4Fe-4S] cluster as a cofactor.

It is found in the cytoplasm. The enzyme catalyses coenzyme B + coenzyme M + 2 oxidized [2Fe-2S]-[ferredoxin] = coenzyme M-coenzyme B heterodisulfide + 2 reduced [2Fe-2S]-[ferredoxin] + 2 H(+). It participates in cofactor metabolism; coenzyme M-coenzyme B heterodisulfide reduction; coenzyme B and coenzyme M from coenzyme M-coenzyme B heterodisulfide: step 1/1. Its function is as follows. Part of a complex that catalyzes the reversible reduction of CoM-S-S-CoB to the thiol-coenzymes H-S-CoM (coenzyme M) and H-S-CoB (coenzyme B). Probably involved in methylotrophic methanogenesis but not in aceticlastic methanogenesis. This chain is Ferredoxin:CoB-CoM heterodisulfide reductase subunit B, found in Methanosarcina acetivorans (strain ATCC 35395 / DSM 2834 / JCM 12185 / C2A).